Reading from the N-terminus, the 442-residue chain is MRFRIYKRKVLILTLVVAACGFVLWSSNGRQRKSDALGPPLLDAEPVRGAGHLAVSVGIRRVSNESAAPLVPAVPRPEVDNLTLRYRSLVYQLNFDQMLRNVGNDGTWSPGELVLVVQVHNRPEYLRLLIDSLRKAQGIQEVLVIFSHDFWSAEINSLISRVDFCPVLQVFFPFSIQLYPNEFPGSDPRDCPRDLKKNAALKLGCINAEYPDSFGHYREAKFSQTKHHWWWKLHFVWERVKVLQDYTGLILFLEEDHYLAPDFYHVFKKMWKLKQQECPGCDVLSLGTYTTIRSFYGIADKVDVKTWKSTEHNMGLALTRDAYQKLIECTDTFCTYDDYNWDWTLQYLTLACLPKIWKVLVPQAPRIFHAGDCGMHHKKTCRPSTQSAQIESLLNSNKQYLFPETLVIGEKFPMAAISPPRKNGGWGDIRDHELCKSYRRLQ.

Residues M1 to K9 lie on the Cytoplasmic side of the membrane. The helical; Signal-anchor for type II membrane protein transmembrane segment at V10–G29 threads the bilayer. At R30 to Q442 the chain is on the lumenal side. Residues N64 and N81 are each glycosylated (N-linked (GlcNAc...) asparagine). Residues Q118 to R122 and D149 contribute to the substrate site. Cysteines 191 and 205 form a disulfide. Residue Q224–H228 participates in substrate binding. D256 is a Mn(2+) binding site. Cysteines 278 and 281 form a disulfide. A substrate-binding site is contributed by R293. Disulfide bonds link C329-C352, C334-C435, and C373-C381. H369 is a binding site for Mn(2+).

This sequence belongs to the glycosyltransferase 16 (GT16) protein family. In terms of assembly, homodimer. Mn(2+) is required as a cofactor. Detected in liver, lung, testis, kidney, brain, spleen, thymus, uterus and intestine.

Its subcellular location is the golgi apparatus membrane. It carries out the reaction an N(4)-{beta-D-GlcNAc-(1-&gt;2)-alpha-D-Man-(1-&gt;3)-[alpha-D-Man-(1-&gt;6)]-beta-D-Man-(1-&gt;4)-beta-D-GlcNAc-(1-&gt;4)-beta-D-GlcNAc}-L-asparaginyl-[protein] + UDP-N-acetyl-alpha-D-glucosamine = N(4)-{beta-D-GlcNAc-(1-&gt;2)-alpha-D-Man-(1-&gt;3)-[beta-D-GlcNAc-(1-&gt;2)-alpha-D-Man-(1-&gt;6)]-beta-D-Man-(1-&gt;4)-beta-D-GlcNAc-(1-&gt;4)-beta-D-GlcNAc}-L-asparaginyl-[protein] + UDP + H(+). Its pathway is protein modification; protein glycosylation. Plays an essential role in protein N-glycosylation. Catalyzes the transfer of N-acetylglucosamine (GlcNAc) onto the free terminal mannose moiety in the core structure of the nascent N-linked glycan chain, giving rise to the second branch in complex glycans. The protein is Alpha-1,6-mannosyl-glycoprotein 2-beta-N-acetylglucosaminyltransferase (Mgat2) of Mus musculus (Mouse).